Consider the following 412-residue polypeptide: Yellow-related salivary protein LJM17 (412 aa).

Positions 1–18 (MRFFFVFLAIVLFQGIHG) are cleaved as a signal peptide. Asparagine 29 carries an N-linked (GlcNAc...) asparagine glycan.

It belongs to the major royal jelly protein family. In terms of tissue distribution, salivary gland.

It is found in the secreted. Probably modulates blood feeding of sand flies on vertebrate species by binding and sequestering different mediators involved in the host response. Binds biogenic amines. Binds serotonin with high affinity. Binds noradrenaline but not adrenaline. Binds dopamine and octopamine. Binds histamine. Inhibits host smooth muscle contraction induced by histamine in bioassay with guinea pig ileum. Immunogenic; elicits antibody production in the host. Functions as a chemoattractant for host neutrophils; likely acts through a G-protein-coupled receptor and effect is dependent on calcium influx. This Lutzomyia longipalpis (Sand fly) protein is Yellow-related salivary protein LJM17.